A 95-amino-acid polypeptide reads, in one-letter code: Small ribosomal subunit protein bS6 (95 aa).

This sequence belongs to the bacterial ribosomal protein bS6 family.

Its function is as follows. Binds together with bS18 to 16S ribosomal RNA. In Shouchella clausii (strain KSM-K16) (Alkalihalobacillus clausii), this protein is Small ribosomal subunit protein bS6.